A 361-amino-acid polypeptide reads, in one-letter code: Serine/threonine-protein kinase SRK2I (361 aa).

The 257-residue stretch at 22-278 (YDFVKDIGSG…IPEIKTHSWF (257 aa)) folds into the Protein kinase domain. ATP is bound by residues 28-36 (IGSGNFGVA) and Lys-51. Asp-141 functions as the Proton acceptor in the catalytic mechanism.

This sequence belongs to the protein kinase superfamily. Ser/Thr protein kinase family. As to quaternary structure, interacts with ABI1. Interacts with I-2 and TOPP1. Interacts with FREE1 (via C-terminus). In terms of processing, autophosphorylated in vitro. Expressed at low levels in seeds, seedlings, roots (especially in tips), stems, leaves, shoots, flowers and siliques.

It carries out the reaction L-seryl-[protein] + ATP = O-phospho-L-seryl-[protein] + ADP + H(+). The enzyme catalyses L-threonyl-[protein] + ATP = O-phospho-L-threonyl-[protein] + ADP + H(+). With respect to regulation, activated by autophosphorylation of its activation loop. Functionally, together with SRK2D, key component and activator of the abscisic acid (ABA) signaling pathway that regulates numerous ABA responses, such as seed germination, Pro accumulation, root growth inhibition, dormancy and seedling growth, and, to a lesser extent, stomatal closure. In response to ABA, phosphorylates the ESCRT-I complex component FREE1, which is required for ABA-induced FREE1 nuclear import. The polypeptide is Serine/threonine-protein kinase SRK2I (SRK2I) (Arabidopsis thaliana (Mouse-ear cress)).